A 532-amino-acid chain; its full sequence is Bifunctional purine biosynthesis protein PurH (532 aa).

One can recognise an MGS-like domain in the interval 1 to 147 (MADRPIRQAL…KNHKDVAIVV (147 aa)).

The protein belongs to the PurH family.

It carries out the reaction (6R)-10-formyltetrahydrofolate + 5-amino-1-(5-phospho-beta-D-ribosyl)imidazole-4-carboxamide = 5-formamido-1-(5-phospho-D-ribosyl)imidazole-4-carboxamide + (6S)-5,6,7,8-tetrahydrofolate. The enzyme catalyses IMP + H2O = 5-formamido-1-(5-phospho-D-ribosyl)imidazole-4-carboxamide. The protein operates within purine metabolism; IMP biosynthesis via de novo pathway; 5-formamido-1-(5-phospho-D-ribosyl)imidazole-4-carboxamide from 5-amino-1-(5-phospho-D-ribosyl)imidazole-4-carboxamide (10-formyl THF route): step 1/1. Its pathway is purine metabolism; IMP biosynthesis via de novo pathway; IMP from 5-formamido-1-(5-phospho-D-ribosyl)imidazole-4-carboxamide: step 1/1. The sequence is that of Bifunctional purine biosynthesis protein PurH from Haemophilus influenzae (strain ATCC 51907 / DSM 11121 / KW20 / Rd).